We begin with the raw amino-acid sequence, 181 residues long: Peptidyl-tRNA hydrolase (181 aa).

Tyr14 serves as a coordination point for tRNA. The Proton acceptor role is filled by His19. Positions 62, 64, and 108 each coordinate tRNA.

It belongs to the PTH family. In terms of assembly, monomer.

The protein resides in the cytoplasm. It catalyses the reaction an N-acyl-L-alpha-aminoacyl-tRNA + H2O = an N-acyl-L-amino acid + a tRNA + H(+). Its function is as follows. Hydrolyzes ribosome-free peptidyl-tRNAs (with 1 or more amino acids incorporated), which drop off the ribosome during protein synthesis, or as a result of ribosome stalling. Catalyzes the release of premature peptidyl moieties from peptidyl-tRNA molecules trapped in stalled 50S ribosomal subunits, and thus maintains levels of free tRNAs and 50S ribosomes. The polypeptide is Peptidyl-tRNA hydrolase (Campylobacter jejuni (strain RM1221)).